The chain runs to 250 residues: Ribosomal RNA small subunit methyltransferase J (250 aa).

S-adenosyl-L-methionine contacts are provided by residues 96–97 (RD) and aspartate 168.

This sequence belongs to the methyltransferase superfamily. RsmJ family.

It localises to the cytoplasm. It carries out the reaction guanosine(1516) in 16S rRNA + S-adenosyl-L-methionine = N(2)-methylguanosine(1516) in 16S rRNA + S-adenosyl-L-homocysteine + H(+). Its function is as follows. Specifically methylates the guanosine in position 1516 of 16S rRNA. This is Ribosomal RNA small subunit methyltransferase J from Neisseria meningitidis serogroup C / serotype 2a (strain ATCC 700532 / DSM 15464 / FAM18).